The sequence spans 116 residues: Heme-degrading monooxygenase (116 aa).

The ABM domain maps to 2–92 (VIVTNTSKIT…EYILENKISF (91 aa)). Asparagine 6 serves as a coordination point for Fe cation. Histidine 76 is a heme binding site.

The protein belongs to the antibiotic biosynthesis monooxygenase family. Heme-degrading monooxygenase IsdG subfamily. As to quaternary structure, homodimer.

It localises to the cytoplasm. It carries out the reaction heme b + 3 reduced [NADPH--hemoprotein reductase] + 3 O2 = biliverdin IXalpha + CO + Fe(2+) + 3 oxidized [NADPH--hemoprotein reductase] + 3 H2O + H(+). Allows bacterial pathogens to use the host heme as an iron source. Catalyzes the oxidative degradation of the heme macrocyclic porphyrin ring to the biliverdin in the presence of a suitable electron donor such as ascorbate or NADPH--cytochrome P450 reductase, with subsequent release of free iron. The chain is Heme-degrading monooxygenase from Halalkalibacterium halodurans (strain ATCC BAA-125 / DSM 18197 / FERM 7344 / JCM 9153 / C-125) (Bacillus halodurans).